The following is a 180-amino-acid chain: Cytidylate kinase 2 (180 aa).

7–15 contributes to the ATP binding site; it reads GKSGCGNTT.

Belongs to the cytidylate kinase family. Type 2 subfamily.

The protein resides in the cytoplasm. It carries out the reaction CMP + ATP = CDP + ADP. It catalyses the reaction dCMP + ATP = dCDP + ADP. This Borreliella burgdorferi (strain ATCC 35210 / DSM 4680 / CIP 102532 / B31) (Borrelia burgdorferi) protein is Cytidylate kinase 2 (cmk2).